The chain runs to 415 residues: Polyadenylate-binding protein RBP45C (415 aa).

The segment at 1-77 (MMQQPPPASN…GGSQNPGSAG (77 aa)) is disordered. Positions 23 to 64 (QQAYLQQQQSWMMQHQQQQQGQPPAGWNQQSAPSSGQPQQQQ) are enriched in low complexity. 3 consecutive RRM domains span residues 80–160 (RSLW…WAQL), 173–252 (HTVF…PAAN), and 278–350 (TTIF…WGRS). Positions 344-356 (RLSWGRSPSNKQT) are enriched in polar residues. Residues 344 to 369 (RLSWGRSPSNKQTQPDQAQYGGGGGY) are disordered.

It belongs to the polyadenylate-binding RBP45 family. Interacts with the poly(A) tail of mRNA in nucleus. As to expression, mostly expressed in seedlings and stems, and, to a lower extent, in leaves and flowers.

It is found in the nucleus. In terms of biological role, heterogeneous nuclear ribonucleoprotein (hnRNP)-protein binding the poly(A) tail of mRNA and probably involved in some steps of pre-mRNA maturation. This is Polyadenylate-binding protein RBP45C (RBP45C) from Arabidopsis thaliana (Mouse-ear cress).